Here is a 157-residue protein sequence, read N- to C-terminus: Glutaredoxin-2, mitochondrial (157 aa).

A mitochondrion-targeting transit peptide spans 1 to 18; sequence MYWRRAALVGTRLIPVRS. Residue S20 is modified to Phosphoserine. The Glutaredoxin domain maps to 51 to 151; it reads VNQIQETISN…PLVHQCHLKN (101 aa). C62 serves as a coordination point for [2Fe-2S] cluster. K68 serves as a coordination point for glutathione. C71 is subject to S-glutathionyl cysteine; alternate. A disulfide bridge connects residues C71 and C74. The glutathione site is built by Q103 and V115. C147 contacts [2Fe-2S] cluster.

This sequence belongs to the glutaredoxin family. Monomer; active form. Homodimer; inactive form. The homodimer is probably linked by 1 2Fe-2S cluster.

It is found in the mitochondrion. With respect to regulation, the 2Fe-2S present in the homodimer leads to inactivation of the enzyme. The 2Fe-2S may serve as a redox sensor: the presence of one-electron oxidants or reductants leading to the loss of the 2Fe-2S cluster, subsequent monomerization and activation of the enzyme. In terms of biological role, glutathione-dependent oxidoreductase that facilitates the maintenance of mitochondrial redox homeostasis upon induction of apoptosis by oxidative stress. Involved in response to hydrogen peroxide and regulation of apoptosis caused by oxidative stress. Acts as a very efficient catalyst of monothiol reactions because of its high affinity for protein glutathione-mixed disulfides. Can receive electrons not only from glutathione (GSH), but also from thioredoxin reductase supporting both monothiol and dithiol reactions. Efficiently catalyzes both glutathionylation and deglutathionylation of mitochondrial complex I, which in turn regulates the superoxide production by the complex. Overexpression decreases the susceptibility to apoptosis and prevents loss of cardiolipin and cytochrome c release. This chain is Glutaredoxin-2, mitochondrial (GLRX2), found in Bos taurus (Bovine).